We begin with the raw amino-acid sequence, 549 residues long: Glucose-6-phosphate isomerase (549 aa).

Residue Glu355 is the Proton donor of the active site. Residues His386 and Lys514 contribute to the active site.

Belongs to the GPI family.

It is found in the cytoplasm. The catalysed reaction is alpha-D-glucose 6-phosphate = beta-D-fructose 6-phosphate. It participates in carbohydrate biosynthesis; gluconeogenesis. It functions in the pathway carbohydrate degradation; glycolysis; D-glyceraldehyde 3-phosphate and glycerone phosphate from D-glucose: step 2/4. In terms of biological role, catalyzes the reversible isomerization of glucose-6-phosphate to fructose-6-phosphate. The chain is Glucose-6-phosphate isomerase from Klebsiella pneumoniae (strain 342).